Here is a 1163-residue protein sequence, read N- to C-terminus: Receptor-type guanylate cyclase gcy-21 (1163 aa).

Residues methionine 1–asparagine 17 form the signal peptide. Over phenylalanine 18–threonine 490 the chain is Extracellular. Asparagine 102, asparagine 296, asparagine 322, asparagine 346, asparagine 466, and asparagine 488 each carry an N-linked (GlcNAc...) asparagine glycan. Residues phenylalanine 491–phenylalanine 511 form a helical membrane-spanning segment. Residues leucine 512 to serine 1163 lie on the Cytoplasmic side of the membrane. The region spanning phenylalanine 587–threonine 882 is the Protein kinase domain. ATP-binding positions include alanine 593–isoleucine 601 and lysine 635. The stretch at threonine 901–leucine 930 forms a coiled coil. Positions threonine 953–glutamate 1083 constitute a Guanylate cyclase domain.

This sequence belongs to the adenylyl cyclase class-4/guanylyl cyclase family. Expressed in ASG sensory neurons.

Its subcellular location is the cell membrane. The catalysed reaction is GTP = 3',5'-cyclic GMP + diphosphate. In terms of biological role, guanylate cyclase involved in the production of the second messenger cGMP. Plays a role in dauer formation. This is Receptor-type guanylate cyclase gcy-21 from Caenorhabditis elegans.